The sequence spans 283 residues: ATP phosphoribosyltransferase (283 aa).

The protein belongs to the ATP phosphoribosyltransferase family. Long subfamily. The cofactor is Mg(2+).

It is found in the cytoplasm. The catalysed reaction is 1-(5-phospho-beta-D-ribosyl)-ATP + diphosphate = 5-phospho-alpha-D-ribose 1-diphosphate + ATP. It functions in the pathway amino-acid biosynthesis; L-histidine biosynthesis; L-histidine from 5-phospho-alpha-D-ribose 1-diphosphate: step 1/9. Feedback inhibited by histidine. Its function is as follows. Catalyzes the condensation of ATP and 5-phosphoribose 1-diphosphate to form N'-(5'-phosphoribosyl)-ATP (PR-ATP). Has a crucial role in the pathway because the rate of histidine biosynthesis seems to be controlled primarily by regulation of HisG enzymatic activity. This is ATP phosphoribosyltransferase from Methanopyrus kandleri (strain AV19 / DSM 6324 / JCM 9639 / NBRC 100938).